The following is a 493-amino-acid chain: Glutamate--tRNA ligase (493 aa).

The 'HIGH' region signature appears at 10 to 20; sequence PSPTGDPHVGT. Residues cysteine 107, cysteine 109, cysteine 134, and histidine 136 each coordinate Zn(2+). Positions 251 to 255 match the 'KMSKS' region motif; that stretch reads KLSKR. Lysine 254 serves as a coordination point for ATP.

It belongs to the class-I aminoacyl-tRNA synthetase family. Glutamate--tRNA ligase type 1 subfamily. In terms of assembly, monomer. Zn(2+) is required as a cofactor.

It localises to the cytoplasm. It catalyses the reaction tRNA(Glu) + L-glutamate + ATP = L-glutamyl-tRNA(Glu) + AMP + diphosphate. Catalyzes the attachment of glutamate to tRNA(Glu) in a two-step reaction: glutamate is first activated by ATP to form Glu-AMP and then transferred to the acceptor end of tRNA(Glu). This chain is Glutamate--tRNA ligase, found in Stutzerimonas stutzeri (strain A1501) (Pseudomonas stutzeri).